Reading from the N-terminus, the 202-residue chain is Nucleoside triphosphate pyrophosphatase (202 aa).

The Proton acceptor role is filled by aspartate 79.

Belongs to the Maf family. Requires a divalent metal cation as cofactor.

It localises to the cytoplasm. The catalysed reaction is a ribonucleoside 5'-triphosphate + H2O = a ribonucleoside 5'-phosphate + diphosphate + H(+). The enzyme catalyses a 2'-deoxyribonucleoside 5'-triphosphate + H2O = a 2'-deoxyribonucleoside 5'-phosphate + diphosphate + H(+). In terms of biological role, nucleoside triphosphate pyrophosphatase. May have a dual role in cell division arrest and in preventing the incorporation of modified nucleotides into cellular nucleic acids. In Rhodopseudomonas palustris (strain ATCC BAA-98 / CGA009), this protein is Nucleoside triphosphate pyrophosphatase.